A 234-amino-acid chain; its full sequence is Probable porphobilinogen deaminase (234 aa).

This sequence belongs to the HMBS family.

The catalysed reaction is 4 porphobilinogen + H2O = hydroxymethylbilane + 4 NH4(+). It functions in the pathway porphyrin-containing compound metabolism; protoporphyrin-IX biosynthesis; coproporphyrinogen-III from 5-aminolevulinate: step 2/4. In terms of biological role, tetrapolymerization of the monopyrrole PBG into the hydroxymethylbilane pre-uroporphyrinogen in several discrete steps. The protein is Probable porphobilinogen deaminase (hemC) of Chlamydia pneumoniae (Chlamydophila pneumoniae).